The sequence spans 242 residues: Agamous-like MADS-box protein MADS4 (242 aa).

In terms of domain architecture, MADS-box spans 1–61; the sequence is MGRGRVELKR…GKLYEFCSSS (61 aa). The K-box domain occupies 89–185; the sequence is ELSSQQEYLK…GTQVNQLQWN (97 aa).

Expressed in flowers and seeds.

The protein resides in the nucleus. Its function is as follows. Probable transcription factor involved in flower development. The protein is Agamous-like MADS-box protein MADS4 of Vitis vinifera (Grape).